Consider the following 501-residue polypeptide: MSSFILAIDQGTTSTRAILFNEEAKLVHYHHVEITQYFPQGGWVEHDPEEIWDSTLLCCRNVLEEASLRAADIAALGISNQRETTILWDRHTGQPLYRAIGWQDRRTVNFCEQLASQAGVLAKFVEKTGLILDPYFSCSKIKWILDNIKGAYEKAKRGELAFGTVDSYLLWKFTGGKCHATDATNASRTGLFNINQQRWDDELLTLFDIPKSLLPTVLDNCAQFGFTDLDLLGHKIPITAMIGDQQAAAVGQACIKPGMVKSTYGTGCFMLLNTGDQIIHSRNRLLATIAYRLNDTVTYGLEGSIFIAGAAVKWLRDPLHLIEKANDSESMASSVEDTGGVYLVPAFTGLGAPYWDPNARGALFGLTRNTQREHIVRAALEAVCYQSKDLVRAILNDGANLTTLRVDGGMAANNWLLQFLSDILGVNVDRSRCIESSALGTAFLAGLGAGLFDSLEEMTGLWQADRHFIPQMDPKKQEELYDGWQKAVEKTLTPAAPLLFP.

Thr12 is an ADP binding site. ATP is bound by residues Thr12, Thr13, and Ser14. Thr12 contacts sn-glycerol 3-phosphate. Arg16 serves as a coordination point for ADP. Sn-glycerol 3-phosphate-binding residues include Arg82, Glu83, Tyr135, and Asp244. Arg82, Glu83, Tyr135, Asp244, and Gln245 together coordinate glycerol. 4 residues coordinate ADP: Thr266, Gly309, Gly409, and Asn413. ATP is bound by residues Thr266, Gly309, and Gly409.

It belongs to the FGGY kinase family.

It carries out the reaction glycerol + ATP = sn-glycerol 3-phosphate + ADP + H(+). It functions in the pathway polyol metabolism; glycerol degradation via glycerol kinase pathway; sn-glycerol 3-phosphate from glycerol: step 1/1. Its activity is regulated as follows. Inhibited by fructose 1,6-bisphosphate (FBP). Functionally, key enzyme in the regulation of glycerol uptake and metabolism. Catalyzes the phosphorylation of glycerol to yield sn-glycerol 3-phosphate. The chain is Glycerol kinase from Coxiella burnetii (strain RSA 331 / Henzerling II).